The following is a 112-amino-acid chain: UPF0060 membrane protein CMS0846 (112 aa).

4 consecutive transmembrane segments (helical) span residues 6–26 (VILF…IWQA), 32–52 (PFWW…IATL), 61–81 (ILAA…TVVD), and 87–107 (RWDV…MAAP).

This sequence belongs to the UPF0060 family.

It localises to the cell membrane. The polypeptide is UPF0060 membrane protein CMS0846 (Clavibacter sepedonicus (Clavibacter michiganensis subsp. sepedonicus)).